The primary structure comprises 151 residues: Deoxyuridine 5'-triphosphate nucleotidohydrolase (151 aa).

Residues 70–72 (RSG), Asn-83, 87–89 (LID), and Met-97 each bind substrate.

Belongs to the dUTPase family. The cofactor is Mg(2+).

It carries out the reaction dUTP + H2O = dUMP + diphosphate + H(+). Its pathway is pyrimidine metabolism; dUMP biosynthesis; dUMP from dCTP (dUTP route): step 2/2. Functionally, this enzyme is involved in nucleotide metabolism: it produces dUMP, the immediate precursor of thymidine nucleotides and it decreases the intracellular concentration of dUTP so that uracil cannot be incorporated into DNA. The protein is Deoxyuridine 5'-triphosphate nucleotidohydrolase of Sodalis glossinidius (strain morsitans).